Consider the following 403-residue polypeptide: Glycerophosphocholine acyltransferase 1 (403 aa).

Residues 1-112 lie on the Cytoplasmic side of the membrane; that stretch reads MDHLEFDENT…SGKVVRFRDK (112 aa). A helical membrane pass occupies residues 113–133; it reads LSFALGVSTCILTALLVGMAP. Residues 134 to 137 are Lumenal-facing; that stretch reads ESMH. The helical transmembrane segment at 138 to 155 threads the bilayer; it reads LWYTIQLFVYLPLRYYTY. The Cytoplasmic portion of the chain corresponds to 156 to 161; it reads QRKGYE. A helical transmembrane segment spans residues 162–182; sequence YFIADFCYWGNILLLVYIWIF. Topologically, residues 183–186 are lumenal; the sequence is PESR. Residues 187–207 form a helical membrane-spanning segment; the sequence is RLFILSYSISYGTLAWSVVAW. Residues 208–218 lie on the Cytoplasmic side of the membrane; sequence RNSLLFHSIDK. The helical transmembrane segment at 219 to 239 threads the bilayer; it reads ITSLFIHFFPPLVLHTIVHLT. Asn240 carries an N-linked (GlcNAc...) asparagine glycan. Residues 240 to 262 are Lumenal-facing; it reads NKSYLKDRFPAVLKVKKIDLLSS. A helical transmembrane segment spans residues 263–283; it reads VEIASFFYALWQIWYYFFIQV. At 284–322 the chain is on the cytoplasmic side; sequence GKQKQIQEGRPTSFTWLSKAYSKTKLGRAVAKLPQNLQP. A helical transmembrane segment spans residues 323-343; the sequence is FVFMIIQYLYSITTMLPCSLW. At 344-352 the chain is on the lumenal side; that stretch reads YNNKLYSTA. The chain crosses the membrane as a helical span at residues 353 to 373; sequence FLALIFGWSVWNGASYYIDVF. The Cytoplasmic segment spans residues 374–403; it reads GRRFQKELEALRQQLAETPTNSGSSSALSR.

It belongs to the GPC1 family.

The protein resides in the endoplasmic reticulum membrane. It is found in the golgi apparatus membrane. The enzyme catalyses sn-glycerol 3-phosphocholine + an acyl-CoA = a 1-acyl-sn-glycero-3-phosphocholine + CoA. It carries out the reaction sn-glycero-3-phosphoethanolamine + an acyl-CoA = a monoacyl-sn-glycero-3-phosphoethanolamine + CoA. It catalyses the reaction sn-glycero-3-phosphoethanolamine + (9Z)-octadecenoyl-CoA = (9Z-octadecenoyl)-sn-glycero-3-phosphoethanolamine + CoA. Functionally, glycerophosphocholine acyltransferase (GPCAT) that utilizes acyl-CoA to acylate glycero-3-phosphocholine (GPC), forming lysophosphatidylcholine (LPC). Shows broad acyl specificities with a preference for 16:0-CoA, polyunsaturated acyl-CoA, and the hydroxylated ricinoleoyl-CoA. Also catalyzes the acylation of glycero-3-phosphoethanolamine (GPE) with acyl-CoA. In addition to acyl-CoA, GPCAT efficiently utilizes LPC and lysophosphatidylethanolamine (LPE) as acyl donors in the acylation of GPC. Contributes to the maintenance of phosphatidylcholine (PC) homeostasis and might also have specific functions in acyl editing of PC, such as transferring acyl groups modified at the sn-2 position of PC to the sn-1. In Schizosaccharomyces pombe (strain 972 / ATCC 24843) (Fission yeast), this protein is Glycerophosphocholine acyltransferase 1.